The primary structure comprises 281 residues: Probable short-chain type dehydrogenase/reductase blr2146 (281 aa).

10 to 34 (VVTGAGAGIGKACALAIAREGGRVV) provides a ligand contact to NAD(+). Ser146 is a substrate binding site. Tyr159 serves as the catalytic Proton acceptor. Positions 261-281 (GNSRAARPAGETAEADAAPRC) are disordered.

This sequence belongs to the short-chain dehydrogenases/reductases (SDR) family.

The chain is Probable short-chain type dehydrogenase/reductase blr2146 from Bradyrhizobium diazoefficiens (strain JCM 10833 / BCRC 13528 / IAM 13628 / NBRC 14792 / USDA 110).